Here is a 302-residue protein sequence, read N- to C-terminus: tRNA pseudouridine synthase B (302 aa).

Asp-45 (nucleophile) is an active-site residue.

Belongs to the pseudouridine synthase TruB family. Type 1 subfamily.

The catalysed reaction is uridine(55) in tRNA = pseudouridine(55) in tRNA. In terms of biological role, responsible for synthesis of pseudouridine from uracil-55 in the psi GC loop of transfer RNAs. In Francisella philomiragia subsp. philomiragia (strain ATCC 25017 / CCUG 19701 / FSC 153 / O#319-036), this protein is tRNA pseudouridine synthase B.